A 428-amino-acid polypeptide reads, in one-letter code: D-serine dehydratase (428 aa).

N6-(pyridoxal phosphate)lysine is present on lysine 57. Tyrosine 203, tyrosine 210, threonine 255, glycine 286, and asparagine 287 together coordinate pyridoxal 5'-phosphate. Residues histidine 398 and cysteine 400 each coordinate Zn(2+).

This sequence belongs to the DSD1 family. In terms of assembly, homodimer. It depends on pyridoxal 5'-phosphate as a cofactor. Zn(2+) is required as a cofactor.

The enzyme catalyses D-serine = pyruvate + NH4(+). Its activity is regulated as follows. Sodium cyanoborohydride, N-ethylmaleimide, hydroxylamine, phenyhydrazin and EDTA are inhibitors of the catalytic activity. In terms of biological role, catalyzes the conversion of D-serine to pyruvate and ammonia. May play a role in D-serine detoxification. This Saccharomyces cerevisiae (strain ATCC 204508 / S288c) (Baker's yeast) protein is D-serine dehydratase.